Here is a 50-residue protein sequence, read N- to C-terminus: Ornatin-E (50 aa).

Residues 42 to 44 (RGD) carry the Cell attachment site motif.

It belongs to the ornatin family.

It is found in the secreted. Its function is as follows. Potent inhibitor of fibrinogen interaction with platelet receptors expressed on glycoprotein IIb-IIIa complex. May prevent blood from clotting during either feeding and/or storage of ingested blood. The chain is Ornatin-E from Placobdella ornata (Turtle leech).